The following is a 179-amino-acid chain: MKQFLDFLPLVVFFAFYKLYDIYAATSALIVATAIVLIYSWVRYRKVEKMALITFVLVAVFGGLTIFFHNDEFIKWKVTVIYGLFAGALLISQWVMKKPLIQRMLGKELTLPQPVWSKLNLAWAVFFILCGLANIYIAFWLPQNIWVNFKVFGLTALTLIFTLLSGVYIYRHLPQEDKS.

A run of 5 helical transmembrane segments spans residues 22–42 (IYAA…YSWV), 50–70 (MALI…FFHN), 76–96 (WKVT…QWVM), 121–141 (LAWA…AFWL), and 149–169 (FKVF…GVYI).

It belongs to the YciB family.

It is found in the cell inner membrane. Functionally, plays a role in cell envelope biogenesis, maintenance of cell envelope integrity and membrane homeostasis. This Citrobacter koseri (strain ATCC BAA-895 / CDC 4225-83 / SGSC4696) protein is Inner membrane-spanning protein YciB.